The primary structure comprises 650 residues: Pentatricopeptide repeat-containing protein At2g41080 (650 aa).

PPR repeat units follow at residues 43-77 (NTSL…GFSS), 78-112 (DKFI…NYMS), 114-139 (NILI…MPDR), 140-174 (KLTT…GFSP), 175-209 (DEYT…GLEL), 210-240 (DLVV…MPVR), 241-275 (NLVA…GCRP), 276-310 (NKIT…GASS), 311-341 (VVAV…REDE), 342-372 (DEVM…MAEQ), 378-413 (NEVA…GFKP), and 414-444 (GLKH…MPIK). Residues 449-524 (IWKTLLSACN…EAGISWFEHK (76 aa)) form a type E motif region. Residues 525–555 (GEVHQFKMGDRSQSKSKEIYSYLKELTLEMK) are type E(+) motif. The tract at residues 556–650 (LKGYKPDTAS…NGKCSCGDYW (95 aa)) is type DYW motif.

It belongs to the PPR family. PCMP-H subfamily.

The chain is Pentatricopeptide repeat-containing protein At2g41080 (PCMP-H29) from Arabidopsis thaliana (Mouse-ear cress).